The following is a 218-amino-acid chain: Cell division protein SepF (218 aa).

A disordered region spans residues 25–115 (DVAASTDNVI…IANRREQYQQ (91 aa)). Polar residues predominate over residues 29-43 (STDNVIPRSQQSVRA). Basic and acidic residues predominate over residues 47–63 (PKQEPRNNHVQQDHQAR).

Belongs to the SepF family. In terms of assembly, homodimer. Interacts with FtsZ.

The protein resides in the cytoplasm. Functionally, cell division protein that is part of the divisome complex and is recruited early to the Z-ring. Probably stimulates Z-ring formation, perhaps through the cross-linking of FtsZ protofilaments. Its function overlaps with FtsA. This is Cell division protein SepF from Streptococcus pyogenes serotype M12 (strain MGAS2096).